The sequence spans 412 residues: cAMP-dependent protein kinase regulatory subunit (412 aa).

Positions 1–142 (MSFEEVYEEL…RLKRSVAGNF (142 aa)) are dimerization and phosphorylation. The short motif at 101–105 (RRQSV) is the Pseudophosphorylation motif element. S104 is modified (phosphoserine). 3',5'-cyclic AMP contacts are provided by residues 143 to 277 (LFKN…EEVP), E224, R233, 278 to 412 (ILSS…STKA), E344, and R353. The segment at 392-412 (MGMDNEYGDQSLHRSPPSTKA) is disordered.

It belongs to the cAMP-dependent kinase regulatory chain family. Tetramer, composed of 2 regulatory (R) and 2 catalytic (C) subunits. In the presence of cAMP it dissociates into 2 active monomeric C subunits and an R dimer.

This chain is cAMP-dependent protein kinase regulatory subunit (cgs1), found in Schizosaccharomyces pombe (strain 972 / ATCC 24843) (Fission yeast).